We begin with the raw amino-acid sequence, 602 residues long: Pentatricopeptide repeat-containing protein At3g04760, chloroplastic (602 aa).

Residues 1–78 (MTPLSSELVG…TDATLPTERR (78 aa)) constitute a chloroplast transit peptide. A compositionally biased stretch (polar residues) spans 42–64 (FSNSNPNNDNGRSFSSSGARNLQ). Residues 42 to 85 (FSNSNPNNDNGRSFSSSGARNLQTTTTTDATLPTERRQQHSQSL) are disordered. A compositionally biased stretch (low complexity) spans 65-74 (TTTTTDATLP). PPR repeat units lie at residues 88-122 (RDTQ…GYNP), 123-153 (DVIL…LEKF), 157-191 (DVFA…DFSP), 192-226 (DTVT…NCQP), 227-261 (TVIT…GLKP), 262-296 (DMFT…GCEP), 297-331 (DVIS…KCDP), 332-366 (NVVT…GLTP), 367-401 (DAYS…GCLP), 402-436 (DIVN…GCSP), 437-471 (NSSS…GIDP), 472-506 (DEIT…EFHP), 507-541 (SVVT…GCRP), and 542-576 (NETT…DAIS).

Belongs to the PPR family. P subfamily.

Its subcellular location is the plastid. The protein localises to the chloroplast. In Arabidopsis thaliana (Mouse-ear cress), this protein is Pentatricopeptide repeat-containing protein At3g04760, chloroplastic.